Reading from the N-terminus, the 459-residue chain is Ribulose bisphosphate carboxylase/oxygenase activase, chloroplastic (459 aa).

164-171 (GGKGQGKS) contacts ATP.

It belongs to the RuBisCO activase family.

Its subcellular location is the plastid. It is found in the chloroplast stroma. Functionally, activation of RuBisCO (ribulose-1,5-bisphosphate carboxylase/oxygenase; EC 4.1.1.39) involves the ATP-dependent carboxylation of the epsilon-amino group of lysine leading to a carbamate structure. The protein is Ribulose bisphosphate carboxylase/oxygenase activase, chloroplastic of Solanum pennellii (Tomato).